Consider the following 237-residue polypeptide: Small ribosomal subunit protein uS3 (237 aa).

In terms of domain architecture, KH type-2 spans 39-107; it reads VRQFLTKELK…PAQINISEVR (69 aa).

Belongs to the universal ribosomal protein uS3 family. Part of the 30S ribosomal subunit. Forms a tight complex with proteins S10 and S14.

Binds the lower part of the 30S subunit head. Binds mRNA in the 70S ribosome, positioning it for translation. The protein is Small ribosomal subunit protein uS3 of Aeromonas hydrophila subsp. hydrophila (strain ATCC 7966 / DSM 30187 / BCRC 13018 / CCUG 14551 / JCM 1027 / KCTC 2358 / NCIMB 9240 / NCTC 8049).